Reading from the N-terminus, the 336-residue chain is Probable long-chain-alcohol O-fatty-acyltransferase 8 (336 aa).

8 helical membrane passes run 7–27 (SFVKVWGSAIISVSYCYYIPS), 38–58 (SVLPVCVLFLVLPLFFVFTIF), 59–79 (SSTTAFCLSILANFKLILFAF), 82–102 (GPLLPLPANLFRFICFTCLPI), 117–135 (WVFFCKAAIFGVLLNVHNY), 152–172 (LYLVLDVLLTIVNALLTIILG), 228–248 (MGCWTTFFVSGLIHELVYFYI), and 284–304 (PMLSRLITVGFLVVTGYFLFF).

Belongs to the wax synthase family.

It localises to the membrane. It catalyses the reaction a long chain fatty alcohol + a fatty acyl-CoA = a wax ester + CoA. Its function is as follows. Catalyzes the final step in the synthesis of long-chain linear esters (waxes). The protein is Probable long-chain-alcohol O-fatty-acyltransferase 8 of Arabidopsis thaliana (Mouse-ear cress).